The following is a 1139-amino-acid chain: MGKVEDFEEHNKNSNQDIEKNVGNRRRSNSNTINDQNENINKNKAIVTKKSFIMNLLRNKEKTKVEQNDDNIVENMNERKNSLKDMSLISDNVEKDNKVKKKNSYLKNLNILGKTKSIEFSFPSNILNNARKNIQEIDEESPLTSNSLRTYKEGISEDNRQNQRNADNNSLNWSTSNINTECNSEFSNIEVKVLKTEKSNSVKLKDNIIDIPNDKNKKELQEINIKNTNKDSYKNLYLKVRNSISFNDNIKIDDENKNDKNNIIDNYNNYDDINSSNEITIDGLNHDDNIKKIDNINNFDNKHDDNLQDHHQNHVHHTFRSSRKSLGNIKSNNTNIKLNNDKNFDTNINKRSILEKYFYDIWKRNITIKKEIYSLSSKNPPNPLKSTFADACQNESSEKELLKKIPLKFNDDSIESLYVLNLNNWISSRMIIIGIVMLILSFIIWPLTTWSLKTSTWGRETYIIILFHTLMAINTLILIFFIIIGSTELCKYSECMSYVLFSLMVALWGLWNIAIGLTLEYNPNLSEMPTTTYELEMIYVLTYIYGFLPLVIIDIFFPSRTKYNWIIHLIFIFLNSSSIILVGSAKPDFVPEIYVVFRILAYTTLCIFLYIGSYTSELQIRYVFYNLLVAGYKLDKIESDMKNKTSNKKISTGIEDLINMLKECTKVILELENETDTNFNVHTKTSYCSNILEQCLSTLTKSDNLYNIDYNVLENPENKKFIEAYVSKSKSNFAGEEVPKGVDFKLNKSFSNNDCISTDKVDLDKKQIKKFLKQINISQLTKMIQFIDNKLLSDWDFNCLTYFDESEYPFFDINLSLICTIDHNIPINIIINFLCFVEKQYNNVPYHNTIHATMVTQKFFCLAKKLGIYDDLEYKIKLVMFISGICHDIGHPGYNNLFFVNSLHPLSIIYNDISVLENYHASITFKILQLNQCNILKNFSEKDFRMMRSYIIELILSTDMKHHFEIISKFRIRRENEDFDYIKNSDDLLILTKMIIKSADISHGSVSWSEHYCWCQRVLSEFYTQGDEELKNKMPLSPLCDRTKHNEVCKSQITFLKFVVMPLFEELSHIDNNKFIKSFCLKRLNSNCIMWDTLMKEEKTIEVYDPAAVKLKDKKKKKVDKKKKSYIDLTLFFIKNVSD.

Disordered regions lie at residues 1-42 (MGKV…NINK) and 154-177 (GISEDNRQNQRNADNNSLNWSTSN). At 1 to 429 (MGKVEDFEEH…LNLNNWISSR (429 aa)) the chain is on the cytoplasmic side. A compositionally biased stretch (basic and acidic residues) spans 9–22 (EHNKNSNQDIEKNV). A compositionally biased stretch (polar residues) spans 29–42 (NSNTINDQNENINK). The chain crosses the membrane as a helical span at residues 430–450 (MIIIGIVMLILSFIIWPLTTW). The Extracellular segment spans residues 451–462 (SLKTSTWGRETY). Residues 463–483 (IIILFHTLMAINTLILIFFII) form a helical membrane-spanning segment. At 484–498 (IGSTELCKYSECMSY) the chain is on the cytoplasmic side. A helical membrane pass occupies residues 499–519 (VLFSLMVALWGLWNIAIGLTL). The Extracellular portion of the chain corresponds to 520–536 (EYNPNLSEMPTTTYELE). A glycan (N-linked (GlcNAc...) asparagine) is linked at Asn-524. A helical membrane pass occupies residues 537–557 (MIYVLTYIYGFLPLVIIDIFF). At 558–564 (PSRTKYN) the chain is on the cytoplasmic side. The helical transmembrane segment at 565 to 585 (WIIHLIFIFLNSSSIILVGSA) threads the bilayer. Residues 586 to 592 (KPDFVPE) are Extracellular-facing. The helical transmembrane segment at 593–613 (IYVVFRILAYTTLCIFLYIGS) threads the bilayer. Topologically, residues 614 to 1139 (YTSELQIRYV…TLFFIKNVSD (526 aa)) are cytoplasmic. One can recognise a PDEase domain in the interval 775–1098 (INISQLTKMI…IMWDTLMKEE (324 aa)). Catalysis depends on His-847, which acts as the Proton donor. 847 to 851 (HNTIH) contacts a nucleoside 3',5'-cyclic phosphate. 4 residues coordinate a divalent metal cation: His-851, His-887, Asp-888, and Asp-1000. Residues Asp-888, Asp-1000, and Gln-1052 each coordinate a nucleoside 3',5'-cyclic phosphate.

This sequence belongs to the cyclic nucleotide phosphodiesterase family. It depends on a divalent metal cation as a cofactor.

Its subcellular location is the cell membrane. The protein localises to the endoplasmic reticulum membrane. The catalysed reaction is 3',5'-cyclic GMP + H2O = GMP + H(+). It carries out the reaction 3',5'-cyclic AMP + H2O = AMP + H(+). The protein operates within purine metabolism; 3',5'-cyclic GMP degradation; GMP from 3',5'-cyclic GMP: step 1/1. It participates in purine metabolism; 3',5'-cyclic AMP degradation; AMP from 3',5'-cyclic AMP: step 1/1. In terms of biological role, plays a role in signal transduction by regulating the intracellular concentration of cyclic nucleotides cAMP and cGMP. Catalyzes the hydrolysis of both cAMP and cGMP to 5'-AMP and 5'-GMP, respectively. By regulating cAMP levels during the asexual blood stage and, thus PKA activation, required for merozoite invasion of erythrocytes and for the parasite development immediately following invasion. This is Dual 3',5'-cyclic-AMP and -GMP phosphodiesterase beta from Plasmodium falciparum (isolate 3D7).